Reading from the N-terminus, the 164-residue chain is Putative anionic 4-hydroxy-benzoate permease (164 aa).

Residues 1–30 (CGRRRGSLAWPDASSPSANPRPGAGAAESS) form a disordered region. The next 3 helical transmembrane spans lie at 62–82 (LWVA…LMFM), 97–117 (GMAQ…VGGL), and 126–146 (PALT…MLAG).

The protein belongs to the major facilitator superfamily. Cyanate porter (TC 2.A.1.17) family.

It localises to the cell membrane. Functionally, may be involved in uptake of anionic 4-hydroxy-benzoate. This Thauera aromatica protein is Putative anionic 4-hydroxy-benzoate permease.